Consider the following 207-residue polypeptide: MAKGLLFIVSAPSGTGKSSLIQALVNTHPLYSIKVSVSHTTRIIRPGECHGKHYYFISNTEFQNMIDKEEFLEYAKVFNNYYGTSKKQINYGLSTGTDVFLDIDWQGARQIRNKLPESKSIFILPPSKEELYRRLCKRGQDSDIIIKKRMNQAVSEMKHYIDYDYLIINDNFNLAVSDLYKIIRVAHLSIKHQIQRNNLLIRNLLNE.

Residues glycine 4–arginine 184 enclose the Guanylate kinase-like domain. Alanine 11–serine 18 is a binding site for ATP.

Belongs to the guanylate kinase family.

It is found in the cytoplasm. It carries out the reaction GMP + ATP = GDP + ADP. Essential for recycling GMP and indirectly, cGMP. The polypeptide is Guanylate kinase (Buchnera aphidicola subsp. Baizongia pistaciae (strain Bp)).